Reading from the N-terminus, the 306-residue chain is Mycothiol acetyltransferase (306 aa).

2 N-acetyltransferase domains span residues Val-5–Pro-162 and Val-155–Ser-306. Residues Leu-82–Val-84 and Arg-90–Thr-95 each bind acetyl-CoA. 1D-myo-inositol 2-(L-cysteinylamino)-2-deoxy-alpha-D-glucopyranoside is bound by residues Glu-182, Lys-222, and Glu-238. Acetyl-CoA contacts are provided by residues Val-242–Val-244 and Gln-249–Lys-255. A 1D-myo-inositol 2-(L-cysteinylamino)-2-deoxy-alpha-D-glucopyranoside-binding site is contributed by Tyr-276.

This sequence belongs to the acetyltransferase family. MshD subfamily. Monomer.

The enzyme catalyses 1D-myo-inositol 2-(L-cysteinylamino)-2-deoxy-alpha-D-glucopyranoside + acetyl-CoA = mycothiol + CoA + H(+). Catalyzes the transfer of acetyl from acetyl-CoA to desacetylmycothiol (Cys-GlcN-Ins) to form mycothiol. This chain is Mycothiol acetyltransferase, found in Saccharomonospora viridis (strain ATCC 15386 / DSM 43017 / JCM 3036 / CCUG 5913 / NBRC 12207 / NCIMB 9602 / P101) (Thermoactinomyces viridis).